A 342-amino-acid polypeptide reads, in one-letter code: Succinylglutamate desuccinylase (342 aa).

Residues H63, E66, and H159 each contribute to the Zn(2+) site. Residue E222 is part of the active site.

The protein belongs to the AspA/AstE family. Succinylglutamate desuccinylase subfamily. Zn(2+) is required as a cofactor.

It catalyses the reaction N-succinyl-L-glutamate + H2O = L-glutamate + succinate. It functions in the pathway amino-acid degradation; L-arginine degradation via AST pathway; L-glutamate and succinate from L-arginine: step 5/5. In terms of biological role, transforms N(2)-succinylglutamate into succinate and glutamate. In Paraburkholderia xenovorans (strain LB400), this protein is Succinylglutamate desuccinylase.